Reading from the N-terminus, the 650-residue chain is Sodium-dependent phosphate transporter 2 (650 aa).

Topologically, residues 1 to 5 (MAMDG) are extracellular. The helical transmembrane segment at 6–26 (YLWMVILGFIIAFILAFSVGA) threads the bilayer. The Cytoplasmic portion of the chain corresponds to 27 to 46 (NDVANSFGTAVGSGVVTLRQ). A helical transmembrane segment spans residues 47 to 67 (ACILASIFETTGSVLLGAKVG). Topologically, residues 68–83 (ETIRKGIIDVNLYNDT) are extracellular. N-linked (GlcNAc...) asparagine glycosylation is present at asparagine 81. A helical transmembrane segment spans residues 84-104 (VVTLMAGEVSAMVGSAVWQLI). Topologically, residues 105 to 109 (ASFLR) are cytoplasmic. Residues 110–130 (LPISGTHCIVGSTIGFSLVAN) form a helical membrane-spanning segment. Residues 131–142 (GTKGVQWMELVK) are Extracellular-facing. A helical transmembrane segment spans residues 143–163 (IVASWFISPLLSGFMSGVLFV). The Cytoplasmic segment spans residues 164 to 192 (LIRMFILTKEDPVPNGLQALPLFYAATIA). The helical transmembrane segment at 193 to 212 (INVFSIMYTGAPVLGLSLPI) threads the bilayer. Position 213 (tryptophan 213) is a topological domain, extracellular. The chain crosses the membrane as a helical span at residues 214-234 (AIALISFGVALLFAFFVWLFV). Over 235 to 482 (CPWMRRKIAG…EEKEEKDTAE (248 aa)) the chain is Cytoplasmic. 6 positions are modified to phosphoserine: serine 253, serine 256, serine 259, serine 268, serine 315, and serine 384. The disordered stretch occupies residues 268 to 310 (SPFKELPGAKASDDSAVPLTNPTGEAVGPSEGTSTGNHPRTAY). Residues 483 to 503 (VHLLFHFLQVLTACFGSFAHG) form a helical membrane-spanning segment. The Extracellular portion of the chain corresponds to 504 to 530 (GNDVSNAIGPLVALWLIYEQGGVMQEA). A helical membrane pass occupies residues 531–551 (ATPVWLLFYGGVGICTGLWVW). Residues 552–571 (GRRVIQTMGKDLTPITPSSG) are Cytoplasmic-facing. Residues 572–586 (FTIELASAFTVVIAS) form a helical membrane-spanning segment. Residues 587-593 (NIGLPVS) are Extracellular-facing. A helical transmembrane segment spans residues 594 to 609 (TTHCKVGSVVAVGWIR). The Cytoplasmic segment spans residues 610-621 (SRKAVDWHLFRN). Residues 622–642 (IFVAWFVTVPVAGLFSAAIMA) traverse the membrane as a helical segment. Residues 643–650 (IFMYGILS) lie on the Extracellular side of the membrane.

The protein belongs to the inorganic phosphate transporter (PiT) (TC 2.A.20) family. In terms of assembly, homodimer.

It localises to the cell membrane. The protein resides in the apical cell membrane. The enzyme catalyses 2 Na(+)(out) + phosphate(out) = 2 Na(+)(in) + phosphate(in). Its function is as follows. Sodium-phosphate symporter which preferentially transports the monovalent form of phosphate with a stoichiometry of two sodium ions per phosphate ion. Plays a critical role in the determination of bone quality and strength by providing phosphate for bone mineralization. Required to maintain normal cerebrospinal fluid phosphate levels. Mediates phosphate-induced calcification of vascular smooth muscle cells (VCMCs) and can functionally compensate for loss of SLC20A1 in VCMCs. In terms of biological role, (Microbial infection) Functions as a retroviral receptor and confers hamster cells susceptibility to infection to Gibbon Ape Leukemia Virus (GaLV) and amphotropic murine leukemia virus (A-MuLV). In Cricetulus griseus (Chinese hamster), this protein is Sodium-dependent phosphate transporter 2 (SLC20A2).